A 97-amino-acid chain; its full sequence is Large ribosomal subunit protein eL21 (97 aa).

This sequence belongs to the eukaryotic ribosomal protein eL21 family.

The protein is Large ribosomal subunit protein eL21 of Methanosarcina barkeri (strain Fusaro / DSM 804).